The primary structure comprises 636 residues: Leucine-rich repeat and fibronectin type-III domain-containing protein 4 (636 aa).

The N-terminal stretch at 1–16 (MAPPLLLLLLASGAAA) is a signal peptide. The 32-residue stretch at 17–48 (CPLPCVCQNLSESLSTLCAHRGLLFVPPNVDR) folds into the LRRNT domain. Over 17–518 (CPLPCVCQNL…LQAHVLGGTL (502 aa)) the chain is Extracellular. N-linked (GlcNAc...) asparagine glycans are attached at residues N25 and N70. LRR repeat units follow at residues 49–70 (RTVE…DFRN), 73–94 (GLVD…SFGD), 97–118 (SLRS…SLRG), 121–142 (NLQH…AFDD), 146–169 (SLED…GSMP), 170–191 (ALHT…VFAQ), and 194–215 (QLSR…PLFS). The LRRCT domain occupies 234-280 (NPLHCNCELLWLRRLARPDDLETCASPPTLAGRYFWAVPEGEFSCEP). Positions 281-367 (PLIARHTQRL…GEATARVELR (87 aa)) constitute an Ig-like domain. C302 and C351 are oxidised to a cystine. 4 N-linked (GlcNAc...) asparagine glycosylation sites follow: N324, N333, N376, and N440. The Fibronectin type-III domain maps to 405-502 (SEPAVQVTEV…GCAHFSTLPA (98 aa)). A helical transmembrane segment spans residues 519-539 (TVAVGGVLVAALLVFTVALLV). Residues 540–636 (RGRGAGNGRL…SAERLEESVV (97 aa)) are Cytoplasmic-facing. A disordered region spans residues 556–585 (VQSQTNGGTSPMPKSHPPRSPPPRPQRSCS). Residues 569 to 580 (KSHPPRSPPPRP) show a composition bias toward pro residues. Phosphoserine is present on residues S585 and S627. Residues 633–636 (ESVV) carry the PDZ-binding motif.

It belongs to the LRFN family. In terms of assembly, can form heteromeric complexes with LRFN1, LRFN2, LRFN3 and LRFN5. Unable to form homophilic interactions across cell junctions. Interacts with DLG1, DLG2 and DLG3. Also interacts with DLG4. Glycosylated. As to expression, expressed in brain and testis. In the brain, weak, but broad expression in the cerebral cortex and diencephalic nuclei. Also detected in other parts of the central nervous system, including the olfactory bulb, pons, cerebellum, and medulla oblongata, as well as in the peripheral nervous system, such as the ganglia of cranial nerves and the dorsal root ganglion during gestation.

The protein localises to the membrane. In terms of biological role, promotes neurite outgrowth in hippocampal neurons. May play a role in redistributing DLG4 to the cell periphery. The protein is Leucine-rich repeat and fibronectin type-III domain-containing protein 4 (Lrfn4) of Mus musculus (Mouse).